A 964-amino-acid chain; its full sequence is Integrator complex subunit 7 (964 aa).

Over residues 937 to 958 (QQLRHQLQQQQQNVPQPAAQRN) the composition is skewed to low complexity. The tract at residues 937 to 964 (QQLRHQLQQQQQNVPQPAAQRNISTRFQ) is disordered.

It belongs to the Integrator subunit 7 family. Component of the Integrator complex, composed of core subunits INTS1, INTS2, INTS3, INTS4, INTS5, INTS6, INTS7, INTS8, INTS9/RC74, INTS10, INTS11/CPSF3L, INTS12, INTS13, INTS14 and INTS15. The core complex associates with protein phosphatase 2A subunits PPP2CA and PPP2R1A, to form the Integrator-PP2A (INTAC) complex.

It is found in the nucleus. The protein resides in the chromosome. Its subcellular location is the cytoplasm. Functionally, component of the integrator complex, a multiprotein complex that terminates RNA polymerase II (Pol II) transcription in the promoter-proximal region of genes. The integrator complex provides a quality checkpoint during transcription elongation by driving premature transcription termination of transcripts that are unfavorably configured for transcriptional elongation: the complex terminates transcription by (1) catalyzing dephosphorylation of the C-terminal domain (CTD) of Pol II subunit POLR2A/RPB1 and SUPT5H/SPT5, (2) degrading the exiting nascent RNA transcript via endonuclease activity and (3) promoting the release of Pol II from bound DNA. The integrator complex is also involved in terminating the synthesis of non-coding Pol II transcripts, such as enhancer RNAs (eRNAs), small nuclear RNAs (snRNAs), telomerase RNAs and long non-coding RNAs (lncRNAs). Essential during embryogenesis for eye development. In Danio rerio (Zebrafish), this protein is Integrator complex subunit 7 (ints7).